Reading from the N-terminus, the 296-residue chain is Bifunctional protein FolD (296 aa).

Residues 166–168 (GRS), S195, and T236 each bind NADP(+).

Belongs to the tetrahydrofolate dehydrogenase/cyclohydrolase family. In terms of assembly, homodimer.

It carries out the reaction (6R)-5,10-methylene-5,6,7,8-tetrahydrofolate + NADP(+) = (6R)-5,10-methenyltetrahydrofolate + NADPH. The catalysed reaction is (6R)-5,10-methenyltetrahydrofolate + H2O = (6R)-10-formyltetrahydrofolate + H(+). The protein operates within one-carbon metabolism; tetrahydrofolate interconversion. Catalyzes the oxidation of 5,10-methylenetetrahydrofolate to 5,10-methenyltetrahydrofolate and then the hydrolysis of 5,10-methenyltetrahydrofolate to 10-formyltetrahydrofolate. This Dehalococcoides mccartyi (strain CBDB1) protein is Bifunctional protein FolD.